The primary structure comprises 348 residues: Putative S-adenosyl-L-methionine-dependent methyltransferase MRA_3439 (348 aa).

S-adenosyl-L-methionine contacts are provided by residues aspartate 171 and 200-201; that span reads DL.

The protein belongs to the UPF0677 family.

In terms of biological role, exhibits S-adenosyl-L-methionine-dependent methyltransferase activity. This Mycobacterium tuberculosis (strain ATCC 25177 / H37Ra) protein is Putative S-adenosyl-L-methionine-dependent methyltransferase MRA_3439.